Consider the following 348-residue polypeptide: Aldose 1-epimerase (348 aa).

Arginine 80 is a substrate binding site. The active-site Proton donor is the histidine 180. Aspartate 243 is a binding site for substrate. The Proton acceptor role is filled by glutamate 311.

Belongs to the aldose epimerase family.

It carries out the reaction alpha-D-glucose = beta-D-glucose. It functions in the pathway carbohydrate metabolism; hexose metabolism. Functionally, mutarotase converts alpha-aldose to the beta-anomer. It is active on D-glucose, L-arabinose, D-xylose, D-galactose, maltose and lactose. The chain is Aldose 1-epimerase (galM) from Streptococcus thermophilus.